Here is a 300-residue protein sequence, read N- to C-terminus: Ribonuclease HIII (300 aa).

The region spanning 86–300 (RPRLGVDESG…FNEICDSASA (215 aa)) is the RNase H type-2 domain. Residues aspartate 92, glutamate 93, and aspartate 196 each coordinate a divalent metal cation.

The protein belongs to the RNase HII family. RnhC subfamily. Mn(2+) serves as cofactor. It depends on Mg(2+) as a cofactor.

The protein localises to the cytoplasm. It carries out the reaction Endonucleolytic cleavage to 5'-phosphomonoester.. Endonuclease that specifically degrades the RNA of RNA-DNA hybrids. In Chlamydia felis (strain Fe/C-56) (Chlamydophila felis), this protein is Ribonuclease HIII.